The chain runs to 152 residues: Large ribosomal subunit protein uL15 (152 aa).

Belongs to the universal ribosomal protein uL15 family. As to quaternary structure, part of the 50S ribosomal subunit.

Binds to the 23S rRNA. In Staphylothermus marinus (strain ATCC 43588 / DSM 3639 / JCM 9404 / F1), this protein is Large ribosomal subunit protein uL15.